A 334-amino-acid polypeptide reads, in one-letter code: Acryloyl-coenzyme A reductase (334 aa).

Residue Cys38 participates in Zn(2+) binding. Tyr39 is a binding site for NADP(+). Zn(2+)-binding residues include His60, Asp90, Cys93, Cys96, Cys104, and Cys146. NADP(+) contacts are provided by residues 173 to 176 and 195 to 197; these read SGGV and TTS.

The protein belongs to the zinc-containing alcohol dehydrogenase family. As to quaternary structure, monomer. Zn(2+) serves as cofactor.

It carries out the reaction propanoyl-CoA + NADP(+) = acryloyl-CoA + NADPH + H(+). Plays a role in autotrophic carbon fixation via the 3-hydroxypropionate/4-hydroxybutyrate cycle. Catalyzes the acryloyl-CoA dependent NADPH oxidation and formation of propionyl-CoA. Inactive towards 3-hydroxypropionyl-CoA, NADH and crotonyl-CoA. The sequence is that of Acryloyl-coenzyme A reductase from Sulfurisphaera tokodaii (strain DSM 16993 / JCM 10545 / NBRC 100140 / 7) (Sulfolobus tokodaii).